The chain runs to 364 residues: MTIYNFSAGPAVLPKPVLEKAQAEMLDYRSSGMSVLEMSHRSKEFDAIIKDAEYLLRELMAIPDHYRVLFLQGGASTQFSMIPLNLAKGKKAYYHVAGSWGKKAYTEAVKLSKTIPFEPILLASSEEETFSYVPTFDKDVIDPDAAYVHLTTNNTIEGTALYDIPDTNGVPIVADMSSNILAVRYKVNDFGMIYAGAQKNIGPAGVTVVIIRNDLLNSEPALSSMLDYKIQADAQSLYNTPPAYSIYIAKMVFEWVKSLGGLDQMEVKNREKSGLLYSFIEQSSFYQSPVKNPKDRSVANIPFTTPSKDLDEKFVKEAEAAGFKNIKGHRSVGGMRASLYNAFPVEGVIALIDFMRVFENQNSQ.

An L-glutamate-binding site is contributed by R41. Pyridoxal 5'-phosphate-binding positions include A75–S76, W100, T155, D175, and Q198. K199 is modified (N6-(pyridoxal phosphate)lysine). N239–T240 serves as a coordination point for pyridoxal 5'-phosphate.

This sequence belongs to the class-V pyridoxal-phosphate-dependent aminotransferase family. SerC subfamily. In terms of assembly, homodimer. Pyridoxal 5'-phosphate is required as a cofactor.

It is found in the cytoplasm. It carries out the reaction O-phospho-L-serine + 2-oxoglutarate = 3-phosphooxypyruvate + L-glutamate. The catalysed reaction is 4-(phosphooxy)-L-threonine + 2-oxoglutarate = (R)-3-hydroxy-2-oxo-4-phosphooxybutanoate + L-glutamate. Its pathway is amino-acid biosynthesis; L-serine biosynthesis; L-serine from 3-phospho-D-glycerate: step 2/3. Its function is as follows. Catalyzes the reversible conversion of 3-phosphohydroxypyruvate to phosphoserine and of 3-hydroxy-2-oxo-4-phosphonooxybutanoate to phosphohydroxythreonine. In Streptococcus uberis (strain ATCC BAA-854 / 0140J), this protein is Phosphoserine aminotransferase.